A 176-amino-acid polypeptide reads, in one-letter code: Cytochrome c-552 (176 aa).

Residues 12–32 (GALIGSLLFLLLMSWAASGIF) form a helical; Signal-anchor membrane-spanning segment. Heme c is bound by residues Cys90, Cys93, His94, Met126, and Met154.

Post-translationally, binds 1 heme c group covalently per subunit.

The protein localises to the cell membrane. In terms of biological role, mediates the electron transport between the cytochrome bc1 complex and cytochrome-c oxidase. This chain is Cytochrome c-552 (cycM), found in Paracoccus denitrificans.